Here is a 245-residue protein sequence, read N- to C-terminus: Fibroblast growth factor 13 (245 aa).

Disordered stretches follow at residues 1–37 (MAAA…SKGN) and 213–245 (TEFS…NDST). The segment at 1–62 (MAAAIASSLI…GSKKRRRRRP (62 aa)) is mediates targeting to the nucleus. The span at 215 to 245 (FSRSGSGTPTKSRSVSGVLNGGKSMSQNDST) shows a compositional bias: polar residues.

The protein belongs to the heparin-binding growth factors family.

It is found in the cell projection. The protein resides in the filopodium. The protein localises to the growth cone. Its subcellular location is the dendrite. It localises to the cell membrane. It is found in the sarcolemma. The protein resides in the cytoplasm. Microtubule-binding protein which directly binds tubulin and is involved in both polymerization and stabilization of microtubules. Through its action on microtubules, may participate in the refinement of axons by negatively regulating axonal and leading processes branching. Plays a crucial role in neuron polarization and migration. Regulates voltage-gated sodium channel transport and function. Required for proper head development, it is involved in neural differentiation through regulation of the mek5-erk5 pathway. The sequence is that of Fibroblast growth factor 13 (fgf13) from Xenopus laevis (African clawed frog).